The sequence spans 308 residues: MGEIKVSPDYNWFRGTVPLKKIIVDDDDSKIWSLYDAGPRSIRCPLIFLPPVSGTADVFFRQILALTGWGYRVIALQYPVYWDHLEFCDGFRKLLDHLQLDKVHLFGASLGGFLAQKFAEYTHKSPRVHSLILCNSFSDTSIFNQTWTANSFWLMPAFMLKKIVLGNFSSGPVDPMMADAIDFMVDRLESLGQSELASRLTLNCQNSYVEPHKIRDIPVTIMDVFGQSALSTEAKEEMYKLYPNARRAHLKTGGNFPYLCRSAEVNLYVQIHLLQFHGTKYAAIDPSMVSAEELEVQKGSLGISQEEQ.

One can recognise an AB hydrolase-1 domain in the interval 87 to 159 (FCDGFRKLLD…NSFWLMPAFM (73 aa)). Ser304 is subject to Phosphoserine.

Belongs to the AB hydrolase superfamily. As to quaternary structure, interacts with CD4. Interacts with ALDH16A1.

It is found in the cytoplasm. May play a role as a negative regulatory factor in CD4-dependent T-cell activation. The chain is Maspardin (SPG21) from Pongo abelii (Sumatran orangutan).